We begin with the raw amino-acid sequence, 310 residues long: HPr kinase/phosphorylase (310 aa).

Residues His138 and Lys159 contribute to the active site. 153–160 (GKSGVGKS) provides a ligand contact to ATP. Ser160 serves as a coordination point for Mg(2+). The Proton acceptor; for phosphorylation activity. Proton donor; for dephosphorylation activity role is filled by Asp177. The important for the catalytic mechanism of both phosphorylation and dephosphorylation stretch occupies residues 201–210 (LEIRGLGIIN). Glu202 contributes to the Mg(2+) binding site. Arg243 is a catalytic residue. Residues 264–269 (PVRPGR) form an important for the catalytic mechanism of dephosphorylation region.

This sequence belongs to the HPrK/P family. As to quaternary structure, homohexamer. Mg(2+) is required as a cofactor.

The catalysed reaction is [HPr protein]-L-serine + ATP = [HPr protein]-O-phospho-L-serine + ADP + H(+). It catalyses the reaction [HPr protein]-O-phospho-L-serine + phosphate + H(+) = [HPr protein]-L-serine + diphosphate. Catalyzes the ATP- as well as the pyrophosphate-dependent phosphorylation of a specific serine residue in HPr, a phosphocarrier protein of the phosphoenolpyruvate-dependent sugar phosphotransferase system (PTS). HprK/P also catalyzes the pyrophosphate-producing, inorganic phosphate-dependent dephosphorylation (phosphorolysis) of seryl-phosphorylated HPr (P-Ser-HPr). The two antagonistic activities of HprK/P are regulated by several intracellular metabolites, which change their concentration in response to the absence or presence of rapidly metabolisable carbon sources (glucose, fructose, etc.) in the growth medium. Also phosphorylates/dephosphorylates the HPr-like catabolite repression protein crh on a specific serine residue. Therefore, by controlling the phosphorylation state of HPr and crh, HPrK/P is a sensor enzyme that plays a major role in the regulation of carbon metabolism and sugar transport: it mediates carbon catabolite repression (CCR), and regulates PTS-catalyzed carbohydrate uptake and inducer exclusion. This Bacillus velezensis (strain DSM 23117 / BGSC 10A6 / LMG 26770 / FZB42) (Bacillus amyloliquefaciens subsp. plantarum) protein is HPr kinase/phosphorylase.